Here is a 393-residue protein sequence, read N- to C-terminus: Formate-dependent phosphoribosylglycinamide formyltransferase (393 aa).

Residues 22-23 and E82 each bind N(1)-(5-phospho-beta-D-ribosyl)glycinamide; that span reads EL. ATP is bound by residues R114, K155, 160–165, 195–198, and E203; these read SSGKGQ and EGLV. The 190-residue stretch at 119 to 308 folds into the ATP-grasp domain; sequence LLAAETLQLP…EFALHVRAFL (190 aa). E267 and E279 together coordinate Mg(2+). Residues D286, K355, and 362–363 each bind N(1)-(5-phospho-beta-D-ribosyl)glycinamide; that span reads RR.

It belongs to the PurK/PurT family. As to quaternary structure, homodimer.

It catalyses the reaction N(1)-(5-phospho-beta-D-ribosyl)glycinamide + formate + ATP = N(2)-formyl-N(1)-(5-phospho-beta-D-ribosyl)glycinamide + ADP + phosphate + H(+). Its pathway is purine metabolism; IMP biosynthesis via de novo pathway; N(2)-formyl-N(1)-(5-phospho-D-ribosyl)glycinamide from N(1)-(5-phospho-D-ribosyl)glycinamide (formate route): step 1/1. In terms of biological role, involved in the de novo purine biosynthesis. Catalyzes the transfer of formate to 5-phospho-ribosyl-glycinamide (GAR), producing 5-phospho-ribosyl-N-formylglycinamide (FGAR). Formate is provided by PurU via hydrolysis of 10-formyl-tetrahydrofolate. The sequence is that of Formate-dependent phosphoribosylglycinamide formyltransferase from Yersinia enterocolitica serotype O:8 / biotype 1B (strain NCTC 13174 / 8081).